We begin with the raw amino-acid sequence, 667 residues long: Protein adenylyltransferase SelO, mitochondrial (667 aa).

The N-terminal 6 residues, 1–6 (MASVRA), are a transit peptide targeting the mitochondrion. Residues Gly154, Gly156, Lys177, Asp189, Gly190, Arg247, and Arg254 each contribute to the ATP site. Residue Asp341 is the Proton acceptor of the active site. Residues Asn342 and Asp351 each contribute to the Mg(2+) site. Asp351 lines the ATP pocket. Positions 628–652 (YHSEEEATGPEAVARSTEEQSSYSN) are disordered. Thr635 carries the phosphothreonine modification. Ser651 is subject to Phosphoserine. Sec665 is a non-standard amino acid (selenocysteine).

The protein belongs to the SELO family. The cofactor is Mg(2+).

The protein localises to the mitochondrion. The enzyme catalyses L-tyrosyl-[protein] + ATP = O-(5'-adenylyl)-L-tyrosyl-[protein] + diphosphate. The catalysed reaction is L-threonyl-[protein] + ATP = 3-O-(5'-adenylyl)-L-threonyl-[protein] + diphosphate. It catalyses the reaction L-seryl-[protein] + ATP = 3-O-(5'-adenylyl)-L-seryl-[protein] + diphosphate. Its function is as follows. Catalyzes the transfer of adenosine 5'-monophosphate (AMP) to Ser, Thr and Tyr residues of target proteins (AMPylation). May be a redox-active mitochondrial selenoprotein which interacts with a redox target protein. This chain is Protein adenylyltransferase SelO, mitochondrial, found in Mus musculus (Mouse).